Consider the following 115-residue polypeptide: Large ribosomal subunit protein uL18 (115 aa).

It belongs to the universal ribosomal protein uL18 family. Part of the 50S ribosomal subunit; part of the 5S rRNA/L5/L18/L25 subcomplex. Contacts the 5S and 23S rRNAs.

This is one of the proteins that bind and probably mediate the attachment of the 5S RNA into the large ribosomal subunit, where it forms part of the central protuberance. The sequence is that of Large ribosomal subunit protein uL18 from Vesicomyosocius okutanii subsp. Calyptogena okutanii (strain HA).